Here is a 389-residue protein sequence, read N- to C-terminus: Phosphopentomutase (389 aa).

6 residues coordinate Mn(2+): Asp10, Asp282, His287, Asp323, His324, and His335.

This sequence belongs to the phosphopentomutase family. Mn(2+) is required as a cofactor.

It localises to the cytoplasm. The catalysed reaction is 2-deoxy-alpha-D-ribose 1-phosphate = 2-deoxy-D-ribose 5-phosphate. The enzyme catalyses alpha-D-ribose 1-phosphate = D-ribose 5-phosphate. It functions in the pathway carbohydrate degradation; 2-deoxy-D-ribose 1-phosphate degradation; D-glyceraldehyde 3-phosphate and acetaldehyde from 2-deoxy-alpha-D-ribose 1-phosphate: step 1/2. Functionally, isomerase that catalyzes the conversion of deoxy-ribose 1-phosphate (dRib-1-P) and ribose 1-phosphate (Rib-1-P) to deoxy-ribose 5-phosphate (dRib-5-P) and ribose 5-phosphate (Rib-5-P), respectively. The protein is Phosphopentomutase of Clostridium kluyveri (strain NBRC 12016).